A 440-amino-acid polypeptide reads, in one-letter code: Homocitrate synthase, mitochondrial (440 aa).

A compositionally biased stretch (polar residues) spans 1 to 23; it reads MSENNEFQSVTESTTAPTTSNPY. The disordered stretch occupies residues 1–27; sequence MSENNEFQSVTESTTAPTTSNPYGPNP. Residues 37–290 form the Pyruvate carboxyltransferase domain; that stretch reads FQLIDSTLRE…RSKYKLHKIR (254 aa). Residue R45 coordinates 2-oxoglutarate. E46 lines the Mg(2+) pocket. Residues H105, R165, and T199 each contribute to the 2-oxoglutarate site. Positions 226 and 228 each coordinate Mg(2+). H323 (proton acceptor) is an active-site residue. At S399 the chain carries Phosphoserine. T410 is modified (phosphothreonine).

The protein belongs to the alpha-IPM synthase/homocitrate synthase family. Homocitrate synthase LYS20/LYS21 subfamily. Requires Mg(2+) as cofactor. It depends on Mn(2+) as a cofactor.

The protein resides in the mitochondrion. The catalysed reaction is acetyl-CoA + 2-oxoglutarate + H2O = (2R)-homocitrate + CoA + H(+). Its pathway is amino-acid biosynthesis; L-lysine biosynthesis via AAA pathway; L-alpha-aminoadipate from 2-oxoglutarate: step 1/5. In terms of biological role, catalyzes the aldol-type condensation of 2-oxoglutarate with acetyl-CoA to yield homocitrate. Carries out the first step of the alpha-aminoadipate (AAA) lysine biosynthesis pathway. In Saccharomyces cerevisiae (strain ATCC 204508 / S288c) (Baker's yeast), this protein is Homocitrate synthase, mitochondrial (LYS21).